The sequence spans 246 residues: 3-deoxy-manno-octulosonate cytidylyltransferase (246 aa).

This sequence belongs to the KdsB family.

The protein resides in the cytoplasm. It catalyses the reaction 3-deoxy-alpha-D-manno-oct-2-ulosonate + CTP = CMP-3-deoxy-beta-D-manno-octulosonate + diphosphate. Its pathway is nucleotide-sugar biosynthesis; CMP-3-deoxy-D-manno-octulosonate biosynthesis; CMP-3-deoxy-D-manno-octulosonate from 3-deoxy-D-manno-octulosonate and CTP: step 1/1. It participates in bacterial outer membrane biogenesis; lipopolysaccharide biosynthesis. In terms of biological role, activates KDO (a required 8-carbon sugar) for incorporation into bacterial lipopolysaccharide in Gram-negative bacteria. In Rickettsia akari (strain Hartford), this protein is 3-deoxy-manno-octulosonate cytidylyltransferase.